A 275-amino-acid chain; its full sequence is Succinate dehydrogenase [ubiquinone] iron-sulfur subunit, mitochondrial (275 aa).

The transit peptide at 1–24 directs the protein to the mitochondrion; that stretch reads MFSRRIQVLSPFLKHFVNRNARMM. The 2Fe-2S ferredoxin-type domain occupies 57-137; it reads PEVKPKLQKY…PTKIYPLPHC (81 aa). 4 residues coordinate [2Fe-2S] cluster: Cys-98, Cys-103, Cys-106, and Cys-118. Residues 178 to 208 form the 4Fe-4S ferredoxin-type domain; sequence DRAKLDGLYECILCACCSTSCPSYWWNSEEY. 3 residues coordinate [4Fe-4S] cluster: Cys-188, Cys-191, and Cys-194. Cys-198 contacts [3Fe-4S] cluster. Trp-203 provides a ligand contact to a ubiquinone. [3Fe-4S] cluster-binding residues include Cys-245 and Cys-251. Residue Cys-255 participates in [4Fe-4S] cluster binding.

It belongs to the succinate dehydrogenase/fumarate reductase iron-sulfur protein family. Component of complex II composed of four subunits: a flavoprotein (FP), an iron-sulfur protein (IP), and a cytochrome b composed of a large and a small subunit. It depends on [2Fe-2S] cluster as a cofactor. [3Fe-4S] cluster is required as a cofactor. The cofactor is [4Fe-4S] cluster.

It is found in the mitochondrion inner membrane. It catalyses the reaction a quinone + succinate = fumarate + a quinol. It functions in the pathway carbohydrate metabolism; tricarboxylic acid cycle; fumarate from succinate (eukaryal route): step 1/1. Functionally, iron-sulfur protein (IP) subunit of succinate dehydrogenase (SDH) that is involved in complex II of the mitochondrial electron transport chain and is responsible for transferring electrons from succinate to ubiquinone (coenzyme Q). This chain is Succinate dehydrogenase [ubiquinone] iron-sulfur subunit, mitochondrial (sdh2), found in Schizosaccharomyces pombe (strain 972 / ATCC 24843) (Fission yeast).